Consider the following 425-residue polypeptide: Protein CLP1 homolog (425 aa).

ATP-binding positions include Glu-18, Lys-59, and 121–126 (DVGKST).

Belongs to the Clp1 family. Clp1 subfamily.

The protein localises to the nucleus. Required for endonucleolytic cleavage during polyadenylation-dependent pre-mRNA 3'-end formation. In Drosophila persimilis (Fruit fly), this protein is Protein CLP1 homolog (cbc).